The primary structure comprises 282 residues: 4-hydroxy-3-methylbut-2-enyl diphosphate reductase (282 aa).

Residue C14 participates in [4Fe-4S] cluster binding. Positions 43 and 78 each coordinate (2E)-4-hydroxy-3-methylbut-2-enyl diphosphate. Dimethylallyl diphosphate is bound by residues H43 and H78. Residues H43 and H78 each coordinate isopentenyl diphosphate. Position 100 (C100) interacts with [4Fe-4S] cluster. Residue H128 coordinates (2E)-4-hydroxy-3-methylbut-2-enyl diphosphate. H128 contacts dimethylallyl diphosphate. Residue H128 coordinates isopentenyl diphosphate. Catalysis depends on E130, which acts as the Proton donor. A (2E)-4-hydroxy-3-methylbut-2-enyl diphosphate-binding site is contributed by T164. C192 contacts [4Fe-4S] cluster. Positions 220, 221, 222, and 266 each coordinate (2E)-4-hydroxy-3-methylbut-2-enyl diphosphate. Positions 220, 221, 222, and 266 each coordinate dimethylallyl diphosphate. Isopentenyl diphosphate is bound by residues S220, S221, N222, and S266.

Belongs to the IspH family. Requires [4Fe-4S] cluster as cofactor.

The catalysed reaction is isopentenyl diphosphate + 2 oxidized [2Fe-2S]-[ferredoxin] + H2O = (2E)-4-hydroxy-3-methylbut-2-enyl diphosphate + 2 reduced [2Fe-2S]-[ferredoxin] + 2 H(+). It catalyses the reaction dimethylallyl diphosphate + 2 oxidized [2Fe-2S]-[ferredoxin] + H2O = (2E)-4-hydroxy-3-methylbut-2-enyl diphosphate + 2 reduced [2Fe-2S]-[ferredoxin] + 2 H(+). It participates in isoprenoid biosynthesis; dimethylallyl diphosphate biosynthesis; dimethylallyl diphosphate from (2E)-4-hydroxy-3-methylbutenyl diphosphate: step 1/1. The protein operates within isoprenoid biosynthesis; isopentenyl diphosphate biosynthesis via DXP pathway; isopentenyl diphosphate from 1-deoxy-D-xylulose 5-phosphate: step 6/6. Catalyzes the conversion of 1-hydroxy-2-methyl-2-(E)-butenyl 4-diphosphate (HMBPP) into a mixture of isopentenyl diphosphate (IPP) and dimethylallyl diphosphate (DMAPP). Acts in the terminal step of the DOXP/MEP pathway for isoprenoid precursor biosynthesis. The sequence is that of 4-hydroxy-3-methylbut-2-enyl diphosphate reductase from Clostridium perfringens (strain ATCC 13124 / DSM 756 / JCM 1290 / NCIMB 6125 / NCTC 8237 / Type A).